A 174-amino-acid chain; its full sequence is Endoribonuclease YbeY (174 aa).

Positions 129, 133, and 139 each coordinate Zn(2+).

It belongs to the endoribonuclease YbeY family. It depends on Zn(2+) as a cofactor.

It is found in the cytoplasm. Single strand-specific metallo-endoribonuclease involved in late-stage 70S ribosome quality control and in maturation of the 3' terminus of the 16S rRNA. In Lactobacillus delbrueckii subsp. bulgaricus (strain ATCC BAA-365 / Lb-18), this protein is Endoribonuclease YbeY.